The chain runs to 357 residues: GPI mannosyltransferase 2 (357 aa).

8 helical membrane-spanning segments follow: residues 6-26, 86-106, 128-148, 167-187, 201-221, 257-277, 286-306, and 334-354; these read TLIV…LVVP, AIAY…ALML, ILSP…FALL, VLGA…PFLF, GVSV…TQYL, YWTA…YLMY, LVPF…MWHV, and YVVR…GAYL.

This sequence belongs to the PIGV family.

The protein localises to the endoplasmic reticulum membrane. Its pathway is glycolipid biosynthesis; glycosylphosphatidylinositol-anchor biosynthesis. In terms of biological role, mannosyltransferase involved in glycosylphosphatidylinositol-anchor biosynthesis. Transfers the second mannose to the glycosylphosphatidylinositol during GPI precursor assembly. The protein is GPI mannosyltransferase 2 (GPI18) of Yarrowia lipolytica (strain CLIB 122 / E 150) (Yeast).